Consider the following 363-residue polypeptide: Galanin receptor 2a (363 aa).

The Extracellular segment spans residues 1–23 (MNASQQIHVFSSHWKVESVIISL). The chain crosses the membrane as a helical span at residues 24–44 (IFSMIFLVGTVGNCLVLAVLI). At 45–54 (RNGQMNTKST) the chain is on the cytoplasmic side. A helical membrane pass occupies residues 55–75 (NLFILNLGLADLCFIVFCVPL). Residues 76–94 (QATIYTMDEWVFGAFVCKA) are Extracellular-facing. An intrachain disulfide couples Cys-92 to Cys-169. Residues 95-115 (VHFIIYLTMYASIFTLAAVSL) traverse the membrane as a helical segment. At 116–135 (DRYLAIRYPLRSRETRTPRN) the chain is on the cytoplasmic side. A helical transmembrane segment spans residues 136 to 156 (ALTSISLVWALSLFFSSPYLS). Residues 157–179 (YYQQMDLDGTTVCIPAWSVHHRQ) lie on the Extracellular side of the membrane. A helical membrane pass occupies residues 180 to 200 (AMDICTFIFGYLIPVLILGIT). Topologically, residues 201-230 (YARTIRYLWTSVDPMQDMSESRKAKRKVTK) are cytoplasmic. Residues 231–251 (MIIIVAVLFCLCWLPHHLVIL) form a helical membrane-spanning segment. The Extracellular segment spans residues 252–268 (CMWFGHFPLNHTTYVLR). Residues 269–289 (ILSHLVAYANSCLNPIVYALV) form a helical membrane-spanning segment. The Cytoplasmic portion of the chain corresponds to 290-363 (SKHFRKGFKK…TSAFMTFNVT (74 aa)).

Belongs to the G-protein coupled receptor 1 family. In terms of tissue distribution, expressed in neurons in the ventral area of the interpeduncular nucleus (IPN) where expression often overlaps with spx1.

Its subcellular location is the membrane. Receptor for the hormone galanin. Receptor for the hormones spexin-1 and spexin-2. The chain is Galanin receptor 2a from Danio rerio (Zebrafish).